The sequence spans 273 residues: Putative phosphoenolpyruvate synthase regulatory protein (273 aa).

Position 153–160 (153–160 (AVSRAGKT)) interacts with ADP.

It belongs to the pyruvate, phosphate/water dikinase regulatory protein family. PSRP subfamily.

It catalyses the reaction [pyruvate, water dikinase] + ADP = [pyruvate, water dikinase]-phosphate + AMP + H(+). The catalysed reaction is [pyruvate, water dikinase]-phosphate + phosphate + H(+) = [pyruvate, water dikinase] + diphosphate. In terms of biological role, bifunctional serine/threonine kinase and phosphorylase involved in the regulation of the phosphoenolpyruvate synthase (PEPS) by catalyzing its phosphorylation/dephosphorylation. This is Putative phosphoenolpyruvate synthase regulatory protein from Xanthomonas oryzae pv. oryzae (strain MAFF 311018).